The following is a 331-amino-acid chain: Ferredoxin--NADP reductase 2 (331 aa).

FAD is bound by residues Glu-37, Gln-45, Tyr-50, Val-90, Phe-124, Asp-286, and Thr-327.

It belongs to the ferredoxin--NADP reductase type 2 family. Homodimer. Requires FAD as cofactor.

The enzyme catalyses 2 reduced [2Fe-2S]-[ferredoxin] + NADP(+) + H(+) = 2 oxidized [2Fe-2S]-[ferredoxin] + NADPH. In Listeria innocua serovar 6a (strain ATCC BAA-680 / CLIP 11262), this protein is Ferredoxin--NADP reductase 2.